The chain runs to 297 residues: 4-hydroxy-tetrahydrodipicolinate synthase (297 aa).

T47 contributes to the pyruvate binding site. Residue Y136 is the Proton donor/acceptor of the active site. K165 acts as the Schiff-base intermediate with substrate in catalysis. Residue I206 coordinates pyruvate.

The protein belongs to the DapA family. In terms of assembly, homotetramer; dimer of dimers.

It is found in the cytoplasm. It carries out the reaction L-aspartate 4-semialdehyde + pyruvate = (2S,4S)-4-hydroxy-2,3,4,5-tetrahydrodipicolinate + H2O + H(+). It functions in the pathway amino-acid biosynthesis; L-lysine biosynthesis via DAP pathway; (S)-tetrahydrodipicolinate from L-aspartate: step 3/4. Functionally, catalyzes the condensation of (S)-aspartate-beta-semialdehyde [(S)-ASA] and pyruvate to 4-hydroxy-tetrahydrodipicolinate (HTPA). This is 4-hydroxy-tetrahydrodipicolinate synthase from Campylobacter curvus (strain 525.92).